The primary structure comprises 55 residues: Large ribosomal subunit protein bL33 (55 aa).

Belongs to the bacterial ribosomal protein bL33 family.

The protein is Large ribosomal subunit protein bL33 of Wigglesworthia glossinidia brevipalpis.